Reading from the N-terminus, the 624-residue chain is Glutamine--fructose-6-phosphate aminotransferase [isomerizing] (624 aa).

Catalysis depends on Cys-2, which acts as the Nucleophile; for GATase activity. One can recognise a Glutamine amidotransferase type-2 domain in the interval 2-226 (CGIVGYVGQQ…QDQAVVLTAD (225 aa)). 2 SIS domains span residues 297-436 (SDQE…ARGT) and 469-614 (LAQR…VDKP). The active-site For Fru-6P isomerization activity is the Lys-619.

As to quaternary structure, homodimer.

It localises to the cytoplasm. The catalysed reaction is D-fructose 6-phosphate + L-glutamine = D-glucosamine 6-phosphate + L-glutamate. In terms of biological role, catalyzes the first step in hexosamine metabolism, converting fructose-6P into glucosamine-6P using glutamine as a nitrogen source. In Mycolicibacterium paratuberculosis (strain ATCC BAA-968 / K-10) (Mycobacterium paratuberculosis), this protein is Glutamine--fructose-6-phosphate aminotransferase [isomerizing].